Consider the following 595-residue polypeptide: DNA-directed RNA polymerase III subunit RPC3 (595 aa).

The leucine-zipper stretch occupies residues 523 to 544 (LIYDMAEILNRIQDFKLEHKIL).

This sequence belongs to the RNA polymerase beta chain family. As to quaternary structure, component of the RNA polymerase III (Pol III) complex consisting of 17 subunits.

It localises to the nucleus. Its function is as follows. DNA-dependent RNA polymerase catalyzes the transcription of DNA into RNA using the four ribonucleoside triphosphates as substrates. Specific core component of RNA polymerase III which synthesizes small RNAs, such as 5S rRNA and tRNAs. The protein is DNA-directed RNA polymerase III subunit RPC3 (RPC82) of Candida albicans (strain SC5314 / ATCC MYA-2876) (Yeast).